Reading from the N-terminus, the 315-residue chain is Protein translocase subunit SecF (315 aa).

The next 6 helical transmembrane spans lie at 12-32 (AWIV…ISWA), 136-156 (ALFR…IIYL), 166-186 (VFAI…FAIF), 188-208 (LVGG…IIGF), 247-267 (SINT…FGGD), and 271-291 (FFAL…IFMA).

The protein belongs to the SecD/SecF family. SecF subfamily. Forms a complex with SecD. Part of the essential Sec protein translocation apparatus which comprises SecA, SecYEG and auxiliary proteins SecDF. Other proteins may also be involved.

Its subcellular location is the cell inner membrane. Functionally, part of the Sec protein translocase complex. Interacts with the SecYEG preprotein conducting channel. SecDF uses the proton motive force (PMF) to complete protein translocation after the ATP-dependent function of SecA. Its function is as follows. Probably participates in protein translocation into and across both the cytoplasmic and thylakoid membranes in cyanobacterial cells. This chain is Protein translocase subunit SecF, found in Synechocystis sp. (strain ATCC 27184 / PCC 6803 / Kazusa).